The following is a 490-amino-acid chain: Probable cytosol aminopeptidase (490 aa).

2 residues coordinate Mn(2+): lysine 260 and aspartate 265. Residue lysine 272 is part of the active site. 3 residues coordinate Mn(2+): aspartate 284, aspartate 343, and glutamate 345. Arginine 347 is an active-site residue.

It belongs to the peptidase M17 family. Requires Mn(2+) as cofactor.

The protein resides in the cytoplasm. It carries out the reaction Release of an N-terminal amino acid, Xaa-|-Yaa-, in which Xaa is preferably Leu, but may be other amino acids including Pro although not Arg or Lys, and Yaa may be Pro. Amino acid amides and methyl esters are also readily hydrolyzed, but rates on arylamides are exceedingly low.. The catalysed reaction is Release of an N-terminal amino acid, preferentially leucine, but not glutamic or aspartic acids.. Functionally, presumably involved in the processing and regular turnover of intracellular proteins. Catalyzes the removal of unsubstituted N-terminal amino acids from various peptides. The chain is Probable cytosol aminopeptidase from Gloeothece citriformis (strain PCC 7424) (Cyanothece sp. (strain PCC 7424)).